Here is a 444-residue protein sequence, read N- to C-terminus: Glutamyl-tRNA reductase (444 aa).

Substrate-binding positions include 49 to 52 (TCNR), Ser-109, 114 to 116 (ETQ), and Gln-120. Cys-50 acts as the Nucleophile in catalysis. 189–194 (GAGKMS) is a binding site for NADP(+). Positions 425 to 444 (KPKKQPAPAGIKEPVLAKKG) are disordered.

It belongs to the glutamyl-tRNA reductase family. In terms of assembly, homodimer.

It carries out the reaction (S)-4-amino-5-oxopentanoate + tRNA(Glu) + NADP(+) = L-glutamyl-tRNA(Glu) + NADPH + H(+). It participates in porphyrin-containing compound metabolism; protoporphyrin-IX biosynthesis; 5-aminolevulinate from L-glutamyl-tRNA(Glu): step 1/2. Its function is as follows. Catalyzes the NADPH-dependent reduction of glutamyl-tRNA(Glu) to glutamate 1-semialdehyde (GSA). The chain is Glutamyl-tRNA reductase from Pelotomaculum thermopropionicum (strain DSM 13744 / JCM 10971 / SI).